A 162-amino-acid polypeptide reads, in one-letter code: Peptidyl-prolyl cis-trans isomerase (162 aa).

A PPIase cyclophilin-type domain is found at 5–161 (FFDVQFGGDA…TTIKIVDSGV (157 aa)).

This sequence belongs to the cyclophilin-type PPIase family. PPIase A subfamily.

It carries out the reaction [protein]-peptidylproline (omega=180) = [protein]-peptidylproline (omega=0). With respect to regulation, binds cyclosporin A (CsA). CsA mediates some of its effects via an inhibitory action on PPIase. In terms of biological role, PPIases accelerate the folding of proteins. It catalyzes the cis-trans isomerization of proline imidic peptide bonds in oligopeptides. This chain is Peptidyl-prolyl cis-trans isomerase, found in Paramecium primaurelia.